A 170-amino-acid chain; its full sequence is Odorant-binding protein 2a (170 aa).

The first 15 residues, 1-15, serve as a signal peptide directing secretion; that stretch reads MKTLFLGVTLGLAAA. Residues cysteine 74 and cysteine 166 are joined by a disulfide bond.

Belongs to the calycin superfamily. Lipocalin family. As to quaternary structure, monomer. Strongly expressed in the nasal structures, salivary and lachrymal glands, and lung. Expressed in the liver.

It is found in the secreted. Binds and transports small hydrophobic volatile molecules with a higher affinity for aldehydes and large fatty acids, including undecanal, palmitic acid, efficient aldehydes, benzenic aldehydes, heterocyclic aldehydes and aliphatic acids. This Homo sapiens (Human) protein is Odorant-binding protein 2a (OBP2A).